The following is a 566-amino-acid chain: DDB1- and CUL4-associated factor 10 (566 aa).

Disordered regions lie at residues 1–72 (MFPF…AERA) and 87–123 (TASA…GAGL). Ser50, Ser57, Ser67, Ser96, Ser99, and Ser100 each carry phosphoserine. A compositionally biased stretch (low complexity) spans 87-100 (TASASQAKLSPSSS). Arg141 is modified (omega-N-methylarginine). WD repeat units lie at residues 173–212 (RTHG…HIKT), 216–254 (AHED…TKVC), 258–297 (GHTS…EDGC), and 303–342 (FHTR…KSLE). Residues 354–374 (TTSSSDLTTTSSSSGSRVSGS) are compositionally biased toward low complexity. The segment at 354-413 (TTSSSDLTTTSSSSGSRVSGSPCHHNDSNSTEKHMSRASQREGVSPRNSLEVLTPEVPGE) is disordered. Ser356 carries the post-translational modification Phosphoserine. A compositionally biased stretch (basic and acidic residues) spans 377-388 (HHNDSNSTEKHM). 3 WD repeats span residues 415 to 455 (DRGN…QEGA), 477 to 515 (VGRG…SELV), and 533 to 566 (SHND…QPKF).

The protein belongs to the WD repeat DCAF10 family. In terms of assembly, interacts with DDB1.

The protein operates within protein modification; protein ubiquitination. In terms of biological role, may function as a substrate receptor for CUL4-DDB1 E3 ubiquitin-protein ligase complex. In Mus musculus (Mouse), this protein is DDB1- and CUL4-associated factor 10 (Dcaf10).